The sequence spans 157 residues: Transcription elongation factor GreA (157 aa).

The stretch at 13–75 forms a coiled coil; the sequence is RARLEAELEE…EIKSILARAQ (63 aa).

It belongs to the GreA/GreB family.

Necessary for efficient RNA polymerase transcription elongation past template-encoded arresting sites. The arresting sites in DNA have the property of trapping a certain fraction of elongating RNA polymerases that pass through, resulting in locked ternary complexes. Cleavage of the nascent transcript by cleavage factors such as GreA or GreB allows the resumption of elongation from the new 3'terminus. GreA releases sequences of 2 to 3 nucleotides. The polypeptide is Transcription elongation factor GreA (Roseiflexus castenholzii (strain DSM 13941 / HLO8)).